Here is a 451-residue protein sequence, read N- to C-terminus: TERF1-interacting nuclear factor 2 (451 aa).

At Ala2 the chain carries N-acetylalanine. A disordered region spans residues 229 to 257 (NPLPKAKPGTHLPQGPSSRTHPEPLAGRH). The TBM motif lies at 256–278 (RHFNLAPLGRRRVQSQWASTRGG). The Nuclear localization signal signature appears at 262–268 (PLGRRRV). Ser295 is subject to Phosphoserine. Glycyl lysine isopeptide (Lys-Gly) (interchain with G-Cter in SUMO2) cross-links involve residues Lys302, Lys306, Lys341, and Lys353.

Monomer. Found in a complex with POT1; TERF1 and TNKS1. Component of the shelterin complex (telosome) composed of TERF1, TERF2, TINF2, TERF2IP ACD and POT1. Interacts with TERF1, TERF2 and ACD. As to expression, detected in heart, brain, placenta, lung, liver, skeletal muscle, kidney and pancreas.

It localises to the nucleus. It is found in the chromosome. The protein resides in the telomere. Its subcellular location is the nucleus matrix. Functionally, component of the shelterin complex (telosome) that is involved in the regulation of telomere length and protection. Shelterin associates with arrays of double-stranded TTAGGG repeats added by telomerase and protects chromosome ends; without its protective activity, telomeres are no longer hidden from the DNA damage surveillance and chromosome ends are inappropriately processed by DNA repair pathways. Plays a role in shelterin complex assembly. Isoform 1 may have additional role in tethering telomeres to the nuclear matrix. This is TERF1-interacting nuclear factor 2 (TINF2) from Homo sapiens (Human).